The primary structure comprises 242 residues: MLSAYYNDPFLSDFCLGKIPLRLASRKSPLAVLQAHECLRRLQTFFPRLWGQVITETTQGDLDQHTPLHSVENTGFFTDDIDFLVQSGKCDLAIHSAKDLPEKPKARVIAITASIDPRDILVFQEKYLLQPFPSRLRIGCSSDRRRALISSLYPSAVITDIRGTIQTRLALLDQQKFDAIVMANAAVSRLGLRLPCTVVLPPPYHPFQGRLAITSCHHIASWEKLFLTCKITENINLLHFFS.

Belongs to the HMBS family.

The catalysed reaction is 4 porphobilinogen + H2O = hydroxymethylbilane + 4 NH4(+). The protein operates within porphyrin-containing compound metabolism; protoporphyrin-IX biosynthesis; coproporphyrinogen-III from 5-aminolevulinate: step 2/4. In terms of biological role, tetrapolymerization of the monopyrrole PBG into the hydroxymethylbilane pre-uroporphyrinogen in several discrete steps. This Chlamydia muridarum (strain MoPn / Nigg) protein is Probable porphobilinogen deaminase (hemC).